The sequence spans 256 residues: MSSTRIPVIALLAAAGRGTRLGGPIPKAFVTLRERTLLERSLQAMLTSESVDEIIILVSPDMETYARDLLRKRGLLNDPEGVRVRLVHGGGERADSVWAGLQAISLDDATPDAIVLIHDSARALTPPGMIARVVRKVHEGATAVIPVLPVSDTIKRVSPDGGVVVDTPNRAELRAVQTPQGFLLSELVAANEKFFADPNPGFIPTDDASLMEWYGADVVCVQGDPMAFKVTTPIDMMLAQRITDEAEPTIFEVPGD.

This sequence belongs to the IspD/TarI cytidylyltransferase family. IspD subfamily.

It catalyses the reaction 2-C-methyl-D-erythritol 4-phosphate + CTP + H(+) = 4-CDP-2-C-methyl-D-erythritol + diphosphate. Its pathway is isoprenoid biosynthesis; isopentenyl diphosphate biosynthesis via DXP pathway; isopentenyl diphosphate from 1-deoxy-D-xylulose 5-phosphate: step 2/6. In terms of biological role, catalyzes the formation of 4-diphosphocytidyl-2-C-methyl-D-erythritol from CTP and 2-C-methyl-D-erythritol 4-phosphate (MEP). This is 2-C-methyl-D-erythritol 4-phosphate cytidylyltransferase from Corynebacterium glutamicum (strain ATCC 13032 / DSM 20300 / JCM 1318 / BCRC 11384 / CCUG 27702 / LMG 3730 / NBRC 12168 / NCIMB 10025 / NRRL B-2784 / 534).